The chain runs to 240 residues: Ribonuclease HII (240 aa).

In terms of domain architecture, RNase H type-2 spans Gly-27 to Asp-226. Residues Asp-33, Glu-34, and Asp-127 each coordinate a divalent metal cation.

Belongs to the RNase HII family. Mn(2+) is required as a cofactor. Requires Mg(2+) as cofactor.

The protein localises to the cytoplasm. It catalyses the reaction Endonucleolytic cleavage to 5'-phosphomonoester.. Its function is as follows. Endonuclease that specifically degrades the RNA of RNA-DNA hybrids. This Parafrankia sp. (strain EAN1pec) protein is Ribonuclease HII.